Here is a 149-residue protein sequence, read N- to C-terminus: Sex-regulated protein janus-A (149 aa).

Substrate is bound at residue lysine 46. The Proton acceptor role is filled by histidine 77. 118–120 (STG) is a binding site for substrate.

It belongs to the janus family.

Functionally, janA and janB regulate somatic sex differentiation. The protein is Sex-regulated protein janus-A (janA) of Drosophila pseudoobscura pseudoobscura (Fruit fly).